A 223-amino-acid chain; its full sequence is uncharacterized protein (223 aa).

Helical transmembrane passes span 1 to 21 (MLII…TFYL) and 45 to 65 (ILIG…TSLI).

It is found in the cell membrane. This is an uncharacterized protein from Haemophilus influenzae (strain ATCC 51907 / DSM 11121 / KW20 / Rd).